We begin with the raw amino-acid sequence, 546 residues long: Chaperonin GroEL (546 aa).

ATP contacts are provided by residues 29–32, Lys-50, 86–90, Gly-414, 477–479, and Asp-493; these read TLGP, DGTTT, and NAL.

This sequence belongs to the chaperonin (HSP60) family. In terms of assembly, forms a cylinder of 14 subunits composed of two heptameric rings stacked back-to-back. Interacts with the co-chaperonin GroES.

The protein localises to the cytoplasm. The enzyme catalyses ATP + H2O + a folded polypeptide = ADP + phosphate + an unfolded polypeptide.. Together with its co-chaperonin GroES, plays an essential role in assisting protein folding. The GroEL-GroES system forms a nano-cage that allows encapsulation of the non-native substrate proteins and provides a physical environment optimized to promote and accelerate protein folding. The protein is Chaperonin GroEL of Leptospira interrogans serogroup Icterohaemorrhagiae serovar copenhageni (strain Fiocruz L1-130).